The primary structure comprises 177 residues: Bifunctional protein PyrR (177 aa).

The PRPP-binding signature appears at 99 to 111; the sequence is VVLVDDVLFTGRT.

It belongs to the purine/pyrimidine phosphoribosyltransferase family. PyrR subfamily.

The enzyme catalyses UMP + diphosphate = 5-phospho-alpha-D-ribose 1-diphosphate + uracil. In terms of biological role, regulates the transcription of the pyrimidine nucleotide (pyr) operon in response to exogenous pyrimidines. Its function is as follows. Also displays a weak uracil phosphoribosyltransferase activity which is not physiologically significant. This chain is Bifunctional protein PyrR, found in Citrifermentans bemidjiense (strain ATCC BAA-1014 / DSM 16622 / JCM 12645 / Bem) (Geobacter bemidjiensis).